Consider the following 390-residue polypeptide: GLH-binding kinase 1 (390 aa).

Residues 38–338 form the Protein kinase domain; the sequence is YVNLSFLNAG…VEDALNHPYV (301 aa). ATP contacts are provided by residues 44–52 and K67; that span reads LNAGAQGTV. The active-site Proton acceptor is D164. Phosphoserine is present on S198. Y200 is modified (phosphotyrosine).

This sequence belongs to the protein kinase superfamily. CMGC Ser/Thr protein kinase family. MAP kinase subfamily. In terms of assembly, interacts with glh-1, glh-2 (via C-terminus), glh-3 (via C-terminus) and glh-4 (via C-terminus). Interacts with csn-5; the interaction may prevent glh-1 degradation induced by kgb-1. Interacts with fos-1. Mg(2+) serves as cofactor. In terms of processing, may be phosphorylated by mek-1 on Ser-198 and/or Tyr-200. Phosphorylation is induced upon Cu(2+) and arsenite-mediated cell stimulation and by fasting. As to expression, expressed in somatic and germline tissues.

Its subcellular location is the cytoplasm. It carries out the reaction L-seryl-[protein] + ATP = O-phospho-L-seryl-[protein] + ADP + H(+). The enzyme catalyses L-threonyl-[protein] + ATP = O-phospho-L-threonyl-[protein] + ADP + H(+). Its activity is regulated as follows. Activated by mek-1 mediated phosphorylation. No differences in basal activation between larvae and adults. Inhibited by phosphatase vhp-1. Mitogen-activated protein kinase which is an essential component of the JNK pathway composed of mlk-1, mek-1 and kgb-1. Phosphorylates the transcription factor fos-1 which prevents fos-1 dimerization and promoter binding and results in activation of target genes including F53A9.2/kreg-1 and lys-3/kreg-2. Phosphorylates jun-1 and activates the AP-1 transcription factor which is a heterodimer of jun-1 and fos-1. Phosphorylates glh-1 in vitro which may play a role in controlling glh-1 protein levels in the germline by targeting it for degradation by the proteasome. Required for oogenesis and probably also for spermatogenesis. Involved in the response to environmental stress such as heavy metals, infection and protein folding stress in an age-dependent manner. In larvae, has a protective role which becomes detrimental in adults. May control susceptibility to infection, heavy metal stress and premature lethality by regulating daf-16 cellular localization. Involved in the transcriptional response to bacterial pore-forming toxins and to fasting. Required for fasting-induced longevity. Involved in axon regeneration after injury downstream of tyrosine receptor svh-2. The chain is GLH-binding kinase 1 from Caenorhabditis elegans.